Consider the following 253-residue polypeptide: 5'/3'-nucleotidase SurE (253 aa).

A divalent metal cation is bound by residues Asp8, Asp9, Ser39, and Asn92.

The protein belongs to the SurE nucleotidase family. A divalent metal cation serves as cofactor.

It is found in the cytoplasm. It carries out the reaction a ribonucleoside 5'-phosphate + H2O = a ribonucleoside + phosphate. It catalyses the reaction a ribonucleoside 3'-phosphate + H2O = a ribonucleoside + phosphate. The catalysed reaction is [phosphate](n) + H2O = [phosphate](n-1) + phosphate + H(+). In terms of biological role, nucleotidase with a broad substrate specificity as it can dephosphorylate various ribo- and deoxyribonucleoside 5'-monophosphates and ribonucleoside 3'-monophosphates with highest affinity to 3'-AMP. Also hydrolyzes polyphosphate (exopolyphosphatase activity) with the preference for short-chain-length substrates (P20-25). Might be involved in the regulation of dNTP and NTP pools, and in the turnover of 3'-mononucleotides produced by numerous intracellular RNases (T1, T2, and F) during the degradation of various RNAs. The chain is 5'/3'-nucleotidase SurE from Shigella dysenteriae serotype 1 (strain Sd197).